Here is a 244-residue protein sequence, read N- to C-terminus: 1-(5-phosphoribosyl)-5-[(5-phosphoribosylamino)methylideneamino] imidazole-4-carboxamide isomerase (244 aa).

Asp-8 serves as the catalytic Proton acceptor. Asp-130 acts as the Proton donor in catalysis.

Belongs to the HisA/HisF family.

Its subcellular location is the cytoplasm. The catalysed reaction is 1-(5-phospho-beta-D-ribosyl)-5-[(5-phospho-beta-D-ribosylamino)methylideneamino]imidazole-4-carboxamide = 5-[(5-phospho-1-deoxy-D-ribulos-1-ylimino)methylamino]-1-(5-phospho-beta-D-ribosyl)imidazole-4-carboxamide. It functions in the pathway amino-acid biosynthesis; L-histidine biosynthesis; L-histidine from 5-phospho-alpha-D-ribose 1-diphosphate: step 4/9. The chain is 1-(5-phosphoribosyl)-5-[(5-phosphoribosylamino)methylideneamino] imidazole-4-carboxamide isomerase from Syntrophomonas wolfei subsp. wolfei (strain DSM 2245B / Goettingen).